The sequence spans 573 residues: Phosphoenolpyruvate-protein phosphotransferase (573 aa).

H190 acts as the Tele-phosphohistidine intermediate in catalysis. Phosphoenolpyruvate contacts are provided by R297 and R334. Mg(2+) contacts are provided by E433 and D457. Phosphoenolpyruvate is bound by residues 456–457 and R467; that span reads ND. C504 serves as the catalytic Proton donor.

The protein belongs to the PEP-utilizing enzyme family. As to quaternary structure, homodimer. Mg(2+) is required as a cofactor.

Its subcellular location is the cytoplasm. The catalysed reaction is L-histidyl-[protein] + phosphoenolpyruvate = N(pros)-phospho-L-histidyl-[protein] + pyruvate. In terms of biological role, general (non sugar-specific) component of the phosphoenolpyruvate-dependent sugar phosphotransferase system (sugar PTS). This major carbohydrate active-transport system catalyzes the phosphorylation of incoming sugar substrates concomitantly with their translocation across the cell membrane. Enzyme I transfers the phosphoryl group from phosphoenolpyruvate (PEP) to the phosphoryl carrier protein (HPr). The sequence is that of Phosphoenolpyruvate-protein phosphotransferase (ptsI) from Borreliella burgdorferi (strain ATCC 35210 / DSM 4680 / CIP 102532 / B31) (Borrelia burgdorferi).